A 697-amino-acid polypeptide reads, in one-letter code: Potassium-transporting ATPase ATP-binding subunit (697 aa).

4 helical membrane-spanning segments follow: residues 55-75 (PIMFVVEIGFIITLILSFLPS), 82-102 (GWFNITVSLILLFTVLFANFA), 245-265 (LTLIFLIVVVTLPIFTNYLGF), and 271-291 (VLVALLVCLIPTTIGGLLSAI). Asp324 acts as the 4-aspartylphosphate intermediate in catalysis. Residues Asp361, Glu365, 393-400 (FKAETRMS), and Lys412 contribute to the ATP site. The Mg(2+) site is built by Asp535 and Asp539. The next 3 membrane-spanning stretches (helical) occupy residues 605–625 (FAIIPAMFTLAIPQMEALNIM), 633–653 (AILSALIFNAVIIPLLIPLAM), and 677–697 (GGVIVPFIGIKVIDMIVGLFI).

This sequence belongs to the cation transport ATPase (P-type) (TC 3.A.3) family. Type IA subfamily. As to quaternary structure, the system is composed of three essential subunits: KdpA, KdpB and KdpC.

The protein localises to the cell membrane. The enzyme catalyses K(+)(out) + ATP + H2O = K(+)(in) + ADP + phosphate + H(+). Its function is as follows. Part of the high-affinity ATP-driven potassium transport (or Kdp) system, which catalyzes the hydrolysis of ATP coupled with the electrogenic transport of potassium into the cytoplasm. This subunit is responsible for energy coupling to the transport system and for the release of the potassium ions to the cytoplasm. The polypeptide is Potassium-transporting ATPase ATP-binding subunit (Bacillus mycoides (strain KBAB4) (Bacillus weihenstephanensis)).